A 303-amino-acid polypeptide reads, in one-letter code: Protease HtpX homolog (303 aa).

Helical transmembrane passes span 19 to 39 (IIIF…VSYF) and 41 to 61 (LGEF…YYAY). His146 contacts Zn(2+). Glu147 is a catalytic residue. His150 is a Zn(2+) binding site. The next 2 membrane-spanning stretches (helical) occupy residues 156–176 (VRLQ…GDSL) and 192–212 (NILG…ATLL). Position 221 (Glu221) interacts with Zn(2+).

The protein belongs to the peptidase M48B family. The cofactor is Zn(2+).

It is found in the cell inner membrane. The chain is Protease HtpX homolog from Dictyoglomus thermophilum (strain ATCC 35947 / DSM 3960 / H-6-12).